Reading from the N-terminus, the 379-residue chain is CCN family member 1 (379 aa).

The signal sequence occupies residues 1-24 (MSSSTIKTLAVAVTLLHLTRLALS). An IGFBP N-terminal domain is found at 25–94 (TCPAACHCPL…TALKGICRAQ (70 aa)). 6 disulfides stabilise this stretch: C26-C50, C30-C52, C32-C53, C39-C56, C64-C78, and C70-C91. The VWFC domain occupies 98–164 (RPCEYNSRIY…GQCCEEWVCD (67 aa)). The residue at position 184 (S184) is a Phosphoserine. One can recognise a TSP type-1 domain in the interval 226 to 271 (KCIVQTTSWSQCSKSCGTGISTRVTNDNSECRLVKETRICEVRPCG). Positions 277–313 (SLKKGKKCSKTKKSPEPVRFTYAGCSSVKKYRPKYCG) are heparin-binding. 5 cysteine pairs are disulfide-bonded: C284–C321, C301–C335, C312–C351, C315–C353, and C320–C357. In terms of domain architecture, CTCK spans 284–358 (CSKTKKSPEP…QSCKCNYNCP (75 aa)).

This sequence belongs to the CCN family. In terms of assembly, interaction with integrins is heparin- and cell-type-dependent and promotes cell adhesion.

It is found in the secreted. In terms of biological role, promotes cell proliferation, chemotaxis, angiogenesis and cell adhesion. Appears to play a role in wound healing by up-regulating, in skin fibroblasts, the expression of a number of genes involved in angiogenesis, inflammation and matrix remodeling including VEGA-A, VEGA-C, MMP1, MMP3, TIMP1, uPA, PAI-1 and integrins alpha-3 and alpha-5. CCN1-mediated gene regulation is dependent on heparin-binding. Down-regulates the expression of alpha-1 and alpha-2 subunits of collagen type-1. Promotes cell adhesion and adhesive signaling through integrin alpha-6/beta-1, cell migration through integrin alpha-1/beta-5 and cell proliferation through integrin alpha-v/beta-3. The protein is CCN family member 1 of Rattus norvegicus (Rat).